Here is a 379-residue protein sequence, read N- to C-terminus: L-lactate dehydrogenase (379 aa).

The FMN hydroxy acid dehydrogenase domain occupies 1–379 (MIISSSTDYR…ITSELLVREP (379 aa)). A substrate-binding site is contributed by Y24. FMN is bound by residues S106 and Q127. Y129 is a substrate binding site. T155 is a binding site for FMN. Substrate is bound at residue R164. An FMN-binding site is contributed by K251. The active-site Proton acceptor is the H275. R278 contacts substrate. 306-330 (DSGIRSGLDVVRMIALGADAAMLGR) serves as a coordination point for FMN.

This sequence belongs to the FMN-dependent alpha-hydroxy acid dehydrogenase family. FMN serves as cofactor.

It is found in the cell membrane. The enzyme catalyses (S)-lactate + A = pyruvate + AH2. In terms of biological role, catalyzes the conversion of L-lactate to pyruvate. Is coupled to the respiratory chain. The protein is L-lactate dehydrogenase of Alcaligenes faecalis.